We begin with the raw amino-acid sequence, 220 residues long: Outer membrane protein assembly factor BamD (220 aa).

Residues 1–22 form the signal peptide; it reads MRLKHFKTFLFITMAIIVIGTG. Cysteine 23 carries N-palmitoyl cysteine lipidation. A lipid anchor (S-diacylglycerol cysteine) is attached at cysteine 23.

It belongs to the BamD family. Part of the Bam complex.

Its subcellular location is the cell outer membrane. Functionally, part of the outer membrane protein assembly complex, which is involved in assembly and insertion of beta-barrel proteins into the outer membrane. The protein is Outer membrane protein assembly factor BamD of Helicobacter pylori (strain ATCC 700392 / 26695) (Campylobacter pylori).